Here is a 75-residue protein sequence, read N- to C-terminus: Small ribosomal subunit protein bS16c (75 aa).

Belongs to the bacterial ribosomal protein bS16 family.

Its subcellular location is the plastid. The protein localises to the chloroplast. This is Small ribosomal subunit protein bS16c from Cyanidium caldarium (Red alga).